The following is a 465-amino-acid chain: Protein dml1 (465 aa).

Serine 446 carries the phosphoserine modification.

It belongs to the misato family.

It is found in the mitochondrion. Its function is as follows. Involved in the partitioning of the mitochondrial organelle and mitochondrial DNA (mtDNA) inheritance. This is Protein dml1 (dml1) from Schizosaccharomyces pombe (strain 972 / ATCC 24843) (Fission yeast).